An 800-amino-acid chain; its full sequence is Phosphate transporter PHO1 homolog 9 (800 aa).

The SPX domain occupies 1–346 (MKFGREFETQ…SRNASKPYLN (346 aa)). Topologically, residues 1 to 398 (MKFGREFETQ…KTKREKHRIT (398 aa)) are cytoplasmic. 3 disordered regions span residues 38 to 77 (QKQQRPPPPPPPPSTGDTVPLKTDGGEGGGGGGGGGPGLS), 91 to 119 (NRASRSPKKSHKHHNPLSSKRHHHHHNHH), and 212 to 234 (PDLNSVASAPSSPHSTMRTPAPS). A compositionally biased stretch (pro residues) spans 42–51 (RPPPPPPPPS). Gly residues predominate over residues 63-75 (GEGGGGGGGGGPG). Over residues 95-119 (RSPKKSHKHHNPLSSKRHHHHHNHH) the composition is skewed to basic residues. Polar residues predominate over residues 216–229 (SVASAPSSPHSTMR). Residues 399 to 419 (YFLGFFSGCAVALAIAITVLV) form a helical membrane-spanning segment. At 420-439 (HIRGLTKSEGRHQYMENIFP) the chain is on the extracellular side. Residues 440–460 (LYSLFGFVAVHLFMYAADIYF) traverse the membrane as a helical segment. Over 461–483 (WSRYRVNYPFIFGFEQGNDLGYR) the chain is Cytoplasmic. Residues 484 to 504 (EVLLVGSGLAVLTFGGVISNL) form a helical membrane-spanning segment. The Extracellular portion of the chain corresponds to 505-520 (DMEMDPRTKSFSVITE). Residues 521–541 (LVPLALLVCLMMVLFCPFNII) traverse the membrane as a helical segment. Topologically, residues 542–670 (YRSSRYFFVG…IFEMKRGTYW (129 aa)) are cytoplasmic. Positions 606–800 (YDSEIYKELY…FQELGGSKSV (195 aa)) constitute an EXS domain. A helical membrane pass occupies residues 671 to 691 (LTVAVTTSSIATLFNTYWDIF). At 692–718 (RDWGLMNRNSKNPWLRDKLLVPYKSIY) the chain is on the extracellular side. Residues 719–739 (FIVMVANVVLRLAWMQTVLGI) form a helical membrane-spanning segment. Residues 740-800 (KEAPFLHKRA…FQELGGSKSV (61 aa)) lie on the Cytoplasmic side of the membrane.

This sequence belongs to the SYG1 (TC 2.A.94) family. As to expression, specifically expressed in pollen grains.

Its subcellular location is the cell membrane. Functionally, may transport inorganic phosphate (Pi). The sequence is that of Phosphate transporter PHO1 homolog 9 (PHO1-H9) from Arabidopsis thaliana (Mouse-ear cress).